Here is a 474-residue protein sequence, read N- to C-terminus: E3 ubiquitin-protein ligase CBL-C (474 aa).

Positions 7-145 (PWGRQWEEAR…HALFPGGKYC (139 aa)) are 4H. Positions 7–321 (PWGRQWEEAR…GKTHNPDLTE (315 aa)) constitute a Cbl-PTB domain. The interval 146 to 218 (GHMYQLTKAP…FEFDVFTRLF (73 aa)) is EF-hand-like. Ca(2+) is bound by residues aspartate 199, threonine 201, and glutamate 210. Positions 219–321 (QPWPTLLKNW…GKTHNPDLTE (103 aa)) are SH2-like. Arginine 264 contacts 4-O-phospho-L-tyrosine. Positions 322 to 350 (LGQAEPQQRIHVSEEQLQLYWAMDSTFEL) are linker. The residue at position 341 (tyrosine 341) is a Phosphotyrosine; by SRC. The segment at 351–390 (CKICAESNKDVKIEPCGHLLCSCCLAAWQHSDSQTCPFCR) adopts an RING-type zinc-finger fold. An interaction with RET region spans residues 351-474 (CKICAESNKD…ALGPQDPAPA (124 aa)). The interval 409-474 (TAEDSGNSSD…ALGPQDPAPA (66 aa)) is disordered. The span at 432-441 (SAPPLPPRPD) shows a compositional bias: pro residues.

As to quaternary structure, interacts with ubiquitin-conjugating enzyme E2 UBE2D2 and UBE2D3. Isoform 1 interacts with EGFR (tyrosine phosphorylated). Interacts with the SH3 domain proteins LYN and CRK. Interacts (via RING-type zinc finger) with TGFB1I1 (via LIM zinc-binding domain 2); the interaction is direct and enhances the E3 activity. Interacts directly with RET (inactive) and CD2AP; dissociates from RET upon RET activation by GDNF which also increases the interaction with CD2AP suggesting dissociation as CBLC:CD2AP complex. Interacts with SRC; the interaction is enhanced when SRC is phosphorylated at 'Tyr-419'. Phosphorylated on multiple tyrosine residues by SRC. Isoform 1, but not isoform 2, is phosphorylated on tyrosines by EGFR. Post-translationally, autoubiquitinated when phosphorylated at Tyr-341, enhanced by SRC; suggesting proteasomal degradation. As to expression, ubiquitous.

The catalysed reaction is S-ubiquitinyl-[E2 ubiquitin-conjugating enzyme]-L-cysteine + [acceptor protein]-L-lysine = [E2 ubiquitin-conjugating enzyme]-L-cysteine + N(6)-ubiquitinyl-[acceptor protein]-L-lysine.. With respect to regulation, phosphorylation at Tyr-341 is necessary and sufficient for the activation of E3 activity. Its function is as follows. Acts as an E3 ubiquitin-protein ligase, which accepts ubiquitin from specific E2 ubiquitin-conjugating enzymes, and then transfers it to substrates promoting their degradation by the proteasome. Functionally coupled with the E2 ubiquitin-protein ligases UB2D1, UB2D2 and UB2D3. Regulator of EGFR mediated signal transduction; upon EGF activation, ubiquitinates EGFR. Isoform 1, but not isoform 2, inhibits EGF stimulated MAPK1 activation. Promotes ubiquitination of SRC phosphorylated at 'Tyr-419'. In collaboration with CD2AP may act as regulatory checkpoint for Ret signaling by modulating the rate of RET degradation after ligand activation; CD2AP converts it from an inhibitor to a promoter of RET degradation; the function limits the potency of GDNF on neuronal survival. This Homo sapiens (Human) protein is E3 ubiquitin-protein ligase CBL-C (CBLC).